The chain runs to 220 residues: Adenylate kinase (220 aa).

10 to 15 provides a ligand contact to ATP; sequence GAGKGT. An NMP region spans residues 30 to 59; sequence STGDMLRAAVKAGTPLGLKAKEVMDGGNLV. Residues Thr31, Arg36, 57–59, 85–88, and Gln92 contribute to the AMP site; these read NLV and GFPR. Residues 122–159 are LID; sequence GRRVHPASGRTYHIRFNPPQTAGMDDETGEPLVQRADD. Residues Arg123 and 132–133 contribute to the ATP site; that span reads TY. 2 residues coordinate AMP: Arg156 and Arg167. Gly205 lines the ATP pocket.

Belongs to the adenylate kinase family. In terms of assembly, monomer.

It is found in the cytoplasm. It catalyses the reaction AMP + ATP = 2 ADP. The protein operates within purine metabolism; AMP biosynthesis via salvage pathway; AMP from ADP: step 1/1. Its function is as follows. Catalyzes the reversible transfer of the terminal phosphate group between ATP and AMP. Plays an important role in cellular energy homeostasis and in adenine nucleotide metabolism. In Chlorobium luteolum (strain DSM 273 / BCRC 81028 / 2530) (Pelodictyon luteolum), this protein is Adenylate kinase.